A 201-amino-acid chain; its full sequence is FMN-dependent NADH:quinone oxidoreductase (201 aa).

Residues S10, 16 to 18 (SQS), 96 to 99 (MYNF), and 140 to 143 (SRGG) each bind FMN.

The protein belongs to the azoreductase type 1 family. As to quaternary structure, homodimer. FMN serves as cofactor.

It catalyses the reaction 2 a quinone + NADH + H(+) = 2 a 1,4-benzosemiquinone + NAD(+). It carries out the reaction N,N-dimethyl-1,4-phenylenediamine + anthranilate + 2 NAD(+) = 2-(4-dimethylaminophenyl)diazenylbenzoate + 2 NADH + 2 H(+). Quinone reductase that provides resistance to thiol-specific stress caused by electrophilic quinones. In terms of biological role, also exhibits azoreductase activity. Catalyzes the reductive cleavage of the azo bond in aromatic azo compounds to the corresponding amines. This chain is FMN-dependent NADH:quinone oxidoreductase, found in Shigella flexneri serotype 5b (strain 8401).